The following is a 156-amino-acid chain: Ribosomal RNA large subunit methyltransferase H (156 aa).

Residues Leu73, Gly104, and 123–128 (LGALTL) contribute to the S-adenosyl-L-methionine site.

Belongs to the RNA methyltransferase RlmH family. In terms of assembly, homodimer.

The protein localises to the cytoplasm. It catalyses the reaction pseudouridine(1915) in 23S rRNA + S-adenosyl-L-methionine = N(3)-methylpseudouridine(1915) in 23S rRNA + S-adenosyl-L-homocysteine + H(+). Functionally, specifically methylates the pseudouridine at position 1915 (m3Psi1915) in 23S rRNA. The polypeptide is Ribosomal RNA large subunit methyltransferase H (Dichelobacter nodosus (strain VCS1703A)).